The chain runs to 450 residues: 23S rRNA (uracil(1939)-C(5))-methyltransferase RlmD (450 aa).

The segment at Met-1–Pro-22 is disordered. The TRAM domain maps to Gln-20–Arg-78. [4Fe-4S] cluster-binding residues include Cys-91, Cys-97, Cys-100, and Cys-179. The S-adenosyl-L-methionine site is built by Gln-283, Phe-312, Asn-317, Glu-333, Asp-360, and Asp-381. Catalysis depends on Cys-407, which acts as the Nucleophile.

The protein belongs to the class I-like SAM-binding methyltransferase superfamily. RNA M5U methyltransferase family. RlmD subfamily.

The enzyme catalyses uridine(1939) in 23S rRNA + S-adenosyl-L-methionine = 5-methyluridine(1939) in 23S rRNA + S-adenosyl-L-homocysteine + H(+). Its function is as follows. Catalyzes the formation of 5-methyl-uridine at position 1939 (m5U1939) in 23S rRNA. This chain is 23S rRNA (uracil(1939)-C(5))-methyltransferase RlmD, found in Pseudomonas fluorescens (strain ATCC BAA-477 / NRRL B-23932 / Pf-5).